A 377-amino-acid chain; its full sequence is Nitric oxide reductase FlRd-NAD(+) reductase (377 aa).

This sequence belongs to the FAD-dependent oxidoreductase family. FAD is required as a cofactor.

Its subcellular location is the cytoplasm. It carries out the reaction 2 reduced [nitric oxide reductase rubredoxin domain] + NAD(+) + H(+) = 2 oxidized [nitric oxide reductase rubredoxin domain] + NADH. It functions in the pathway nitrogen metabolism; nitric oxide reduction. In terms of biological role, one of at least two accessory proteins for anaerobic nitric oxide (NO) reductase. Reduces the rubredoxin moiety of NO reductase. The sequence is that of Nitric oxide reductase FlRd-NAD(+) reductase from Salmonella agona (strain SL483).